The sequence spans 387 residues: Muscleblind-like protein 1 (387 aa).

Threonine 6 carries the phosphothreonine modification. C3H1-type zinc fingers lie at residues 13–41 (WLTLEVCREFQRGTCSRPDTECKFAHPSK), 47–73 (NGRVIACFDSLKGRCSRENCKYLHPPP), 178–206 (TDRLEVCREYQRGNCNRGENDCRFAHPAD), and 214–240 (DNTVTVCMDYIKGRCSREKCKYFHPPA).

The protein belongs to the muscleblind family. Interacts with DDX1 and YBX1. Interacts with HNRNPH1; the interaction in RNA-independent. Interacts with RBPMS; the interaction allows cooperative assembly of RNA-bound stable cell-specific alternative splicing regulatory complexes.

The protein resides in the nucleus. It is found in the cytoplasm. It localises to the cytoplasmic granule. Functionally, mediates pre-mRNA alternative splicing regulation. Acts either as activator or repressor of splicing on specific pre-mRNA targets. Inhibits cardiac troponin-T (TNNT2) pre-mRNA exon inclusion but induces insulin receptor (IR) pre-mRNA exon inclusion in muscle. Antagonizes the alternative splicing activity pattern of CELF proteins. Regulates the TNNT2 exon 5 skipping through competition with U2AF2. Inhibits the formation of the spliceosome A complex on intron 4 of TNNT2 pre-mRNA. Binds to the stem-loop structure within the polypyrimidine tract of TNNT2 intron 4 during spliceosome assembly. Binds to the 5'-YGCU(U/G)Y-3'consensus sequence. Binds to the IR RNA. Binds to expanded CUG repeat RNA, which folds into a hairpin structure containing GC base pairs and bulged, unpaired U residues. Together with RNA binding proteins RBPMS and RBFOX2, activates vascular smooth muscle cells alternative splicing events. Regulates NCOR2 alternative splicing. This Rattus norvegicus (Rat) protein is Muscleblind-like protein 1.